Reading from the N-terminus, the 1930-residue chain is Transport and Golgi organization protein 1 homolog (1930 aa).

An N-terminal signal peptide occupies residues 1 to 24 (MAAAPGLLFWLFVLGALWWVPGQS). Residues 25 to 1171 (DLSHGRRFSD…EPAAVPPLES (1147 aa)) are Lumenal-facing. Residues 45–107 (MLMYRGKALE…PKDLIKVLHK (63 aa)) enclose the SH3 domain. Disordered stretches follow at residues 144-263 (LELE…REKT), 317-496 (EEEE…AAEK), 547-737 (LGSS…MNSQ), 754-891 (TKQP…TPEI), and 1018-1149 (TAPL…PVGA). A compositionally biased stretch (basic and acidic residues) spans 152–189 (EESKKAEEVSQHREKSPEESRGRELDPVPEPEAFRADS). Positions 197-211 (SESTEGLQGQPSAQE) are enriched in polar residues. Residue Ser229 is modified to Phosphoserine. The span at 247 to 256 (ESRTGNSSPA) shows a compositional bias: polar residues. A compositionally biased stretch (acidic residues) spans 317–330 (EEEEEVEEDADSSD). Residues 338-368 (SDKDEKVPGKPMIEKYLTDKDPNLSEEDKVE) show a composition bias toward basic and acidic residues. N-linked (GlcNAc...) asparagine glycosylation occurs at Asn360. The span at 420 to 430 (DSEDEGDDLFV) shows a compositional bias: acidic residues. Composition is skewed to basic and acidic residues over residues 431 to 442 (EEPKTNDVKDSE) and 451 to 461 (GEEKDIQESRK). N-linked (GlcNAc...) asparagine glycosylation is present at Asn631. Residues 661 to 677 (EDGTDAEQARAIRRPQE) are compositionally biased toward basic and acidic residues. Residues 692-701 (DEEEEEEEGD) are compositionally biased toward acidic residues. The segment covering 715–726 (VSAQQSRENSPS) has biased composition (polar residues). Residues 791-800 (EESHLADMRA) are compositionally biased toward basic and acidic residues. Ser856 carries the phosphoserine modification. The segment covering 1030–1039 (GWARPGEERQ) has biased composition (basic and acidic residues). Composition is skewed to polar residues over residues 1040 to 1054 (PPQQ…TGDL) and 1115 to 1127 (QPVT…SEVS). Over residues 1128–1137 (QKPDTKKDID) the composition is skewed to basic and acidic residues. Residues 1172–1192 (AFGSLYAFILYLSKMLLATLP) lie within the membrane without spanning it. Residues 1193-1202 (DNVQPGPDFY) lie on the Lumenal side of the membrane. Residues 1203 to 1223 (GLPWQPVIITAVLGIVSFAIF) form a helical membrane-spanning segment. The Cytoplasmic segment spans residues 1224 to 1930 (SWRTILVVKS…DRSQASKPTP (707 aa)). 2 coiled-coil regions span residues 1236–1329 (YQVT…KNQD) and 1359–1422 (LNEA…EIAL). The tract at residues 1238 to 1677 (VTEKQISEKL…VIVKPMPGRP (440 aa)) is mediates interaction with MIA2. Positions 1447-1472 (ESEDPDKGGNESDDLANGETGGDRSE) are disordered. The residue at position 1458 (Ser1458) is a Phosphoserine. Residues 1514–1662 (NLEDQIKKLE…LLEMTQKMAM (149 aa)) adopt a coiled-coil conformation. Disordered regions lie at residues 1669-1796 (IVKP…VPLM), 1801-1820 (PPPI…FGPR), and 1840-1930 (APGV…KPTP). Residues 1677 to 1694 (PNTQNPPRRGLLSQNGSF) show a composition bias toward polar residues. Phosphoserine occurs at positions 1693 and 1705. Pro residues predominate over residues 1706 to 1715 (PPLPAEPPGR). Positions 1722–1738 (SRRDTPRSEFGSLDRHL) are enriched in basic and acidic residues. A phosphoserine mark is found at Ser1733, Ser1754, Ser1766, and Ser1770. Low complexity predominate over residues 1760–1773 (PVVNSSSRSSSPAK). The proline-rich domain (PRD); mediates interaction with the COPII coat subunits SEC23A and SEC23B stretch occupies residues 1776 to 1930 (DEGKVNMAPK…DRSQASKPTP (155 aa)). Over residues 1801–1811 (PPPIRYGPPPQ) the composition is skewed to pro residues. The residue at position 1805 (Arg1805) is an Asymmetric dimethylarginine. The tract at residues 1809–1869 (PPQLCGGPFG…GHTPFRPPGS (61 aa)) is SEC16A-interacting region (SIR); required for its localization to endoplasmic reticulum exit sites and for its interaction with SEC16A. A compositionally biased stretch (basic and acidic residues) spans 1846–1858 (GKRDLPLDPREFL). Pro residues predominate over residues 1881 to 1898 (RLPPPTHGPQEYPPPPPA). The residue at position 1915 (Ser1915) is a Phosphoserine. A compositionally biased stretch (polar residues) spans 1915-1930 (SPSSVQDRSQASKPTP).

It belongs to the MIA/OTOR family. Tango1 subfamily. In terms of assembly, interacts with MIA2. Interacts (via SH3 domain) with COL7A1. Interacts with the COPII coat subunits SEC23A, SEC23B and maybe SEC24C. May interact with APOB and MIA2. Interacts with SEC16A.

It localises to the endoplasmic reticulum membrane. Functionally, plays a role in the transport of cargos that are too large to fit into COPII-coated vesicles and require specific mechanisms to be incorporated into membrane-bound carriers and exported from the endoplasmic reticulum. This protein is required for collagen VII (COL7A1) secretion by loading COL7A1 into transport carriers. It may participate in cargo loading of COL7A1 at endoplasmic reticulum exit sites by binding to COPII coat subunits Sec23/24 and guiding SH3-bound COL7A1 into a growing carrier. Does not play a role in global protein secretion and is apparently specific to COL7A1 cargo loading. However, it may participate in secretion of other proteins in cells that do not secrete COL7A1. It is also specifically required for the secretion of lipoproteins by participating in their export from the endoplasmic reticulum. Required for correct assembly of COPII coat components at endoplasmic reticulum exit sites (ERES) and for the localization of SEC16A and membrane-bound ER-resident complexes consisting of MIA2 and PREB/SEC12 to ERES. This is Transport and Golgi organization protein 1 homolog from Mus musculus (Mouse).